Consider the following 246-residue polypeptide: UDP-N-acetyl-D-mannosaminuronic acid transferase (246 aa).

The protein belongs to the glycosyltransferase 26 family.

It catalyses the reaction UDP-N-acetyl-alpha-D-mannosaminouronate + N-acetyl-alpha-D-glucosaminyl-di-trans,octa-cis-undecaprenyl diphosphate = beta-D-ManNAcA-(1-&gt;4)-alpha-D-GlcNAc-di-trans,octa-cis-undecaprenyl diphosphate + UDP + H(+). It functions in the pathway bacterial outer membrane biogenesis; enterobacterial common antigen biosynthesis. In terms of biological role, catalyzes the synthesis of Und-PP-GlcNAc-ManNAcA (Lipid II), the second lipid-linked intermediate involved in enterobacterial common antigen (ECA) synthesis. This is UDP-N-acetyl-D-mannosaminuronic acid transferase from Salmonella choleraesuis (strain SC-B67).